Consider the following 223-residue polypeptide: Coiled-coil domain-containing protein 70 (223 aa).

Positions 129-153 form a coiled coil; the sequence is NALWERDRNLLQEDKALWEEEKALW. The segment at 199–223 is disordered; it reads EQRHQNGPYNANEEPQSTSFPRGRA. Residues 203 to 223 are compositionally biased toward polar residues; sequence QNGPYNANEEPQSTSFPRGRA.

This Mus musculus (Mouse) protein is Coiled-coil domain-containing protein 70.